Here is a 92-residue protein sequence, read N- to C-terminus: ATP synthase subunit c (92 aa).

The next 2 helical transmembrane spans lie at 20–40 (GAGL…GTGL) and 71–91 (MAIS…LVFV).

This sequence belongs to the ATPase C chain family. F-type ATPases have 2 components, F(1) - the catalytic core - and F(0) - the membrane proton channel. F(1) has five subunits: alpha(3), beta(3), gamma(1), delta(1), epsilon(1). F(0) has three main subunits: a(1), b(2) and c(10-14). The alpha and beta chains form an alternating ring which encloses part of the gamma chain. F(1) is attached to F(0) by a central stalk formed by the gamma and epsilon chains, while a peripheral stalk is formed by the delta and b chains.

It is found in the cell membrane. In terms of biological role, f(1)F(0) ATP synthase produces ATP from ADP in the presence of a proton or sodium gradient. F-type ATPases consist of two structural domains, F(1) containing the extramembraneous catalytic core and F(0) containing the membrane proton channel, linked together by a central stalk and a peripheral stalk. During catalysis, ATP synthesis in the catalytic domain of F(1) is coupled via a rotary mechanism of the central stalk subunits to proton translocation. Functionally, key component of the F(0) channel; it plays a direct role in translocation across the membrane. A homomeric c-ring of between 10-14 subunits forms the central stalk rotor element with the F(1) delta and epsilon subunits. This is ATP synthase subunit c from Mycoplasmopsis pulmonis (strain UAB CTIP) (Mycoplasma pulmonis).